The primary structure comprises 305 residues: Coenzyme PQQ synthesis protein B (305 aa).

Belongs to the PqqB family.

The protein operates within cofactor biosynthesis; pyrroloquinoline quinone biosynthesis. May be involved in the transport of PQQ or its precursor to the periplasm. In Cupriavidus necator (strain ATCC 17699 / DSM 428 / KCTC 22496 / NCIMB 10442 / H16 / Stanier 337) (Ralstonia eutropha), this protein is Coenzyme PQQ synthesis protein B.